The chain runs to 443 residues: Thymidine phosphorylase (443 aa).

Belongs to the thymidine/pyrimidine-nucleoside phosphorylase family. Homodimer.

It carries out the reaction thymidine + phosphate = 2-deoxy-alpha-D-ribose 1-phosphate + thymine. Its pathway is pyrimidine metabolism; dTMP biosynthesis via salvage pathway; dTMP from thymine: step 1/2. Functionally, the enzymes which catalyze the reversible phosphorolysis of pyrimidine nucleosides are involved in the degradation of these compounds and in their utilization as carbon and energy sources, or in the rescue of pyrimidine bases for nucleotide synthesis. This chain is Thymidine phosphorylase, found in Shewanella denitrificans (strain OS217 / ATCC BAA-1090 / DSM 15013).